A 206-amino-acid polypeptide reads, in one-letter code: Ribosomal RNA large subunit methyltransferase E (206 aa).

S-adenosyl-L-methionine-binding residues include G60, W62, D80, D96, and D121. K161 functions as the Proton acceptor in the catalytic mechanism.

This sequence belongs to the class I-like SAM-binding methyltransferase superfamily. RNA methyltransferase RlmE family.

It is found in the cytoplasm. The catalysed reaction is uridine(2552) in 23S rRNA + S-adenosyl-L-methionine = 2'-O-methyluridine(2552) in 23S rRNA + S-adenosyl-L-homocysteine + H(+). In terms of biological role, specifically methylates the uridine in position 2552 of 23S rRNA at the 2'-O position of the ribose in the fully assembled 50S ribosomal subunit. This Legionella pneumophila (strain Corby) protein is Ribosomal RNA large subunit methyltransferase E.